The sequence spans 131 residues: Acidic leucine-rich nuclear phosphoprotein 32 family member D (131 aa).

5 LRR repeats span residues 18–38, 43–64, 65–87, 89–110, and 114–131; these read DVKELFLDNSQSNEGKLEGLT, ELELLNTINIGLTSIANLPKLN, KLKKLELSSNRASVGLEVLAEKC, NLIHLNLSGNKIKDLSTIEPLK, and NLESLDLFTCEVTNLNNY.

The protein belongs to the ANP32 family.

This chain is Acidic leucine-rich nuclear phosphoprotein 32 family member D (ANP32D), found in Homo sapiens (Human).